We begin with the raw amino-acid sequence, 613 residues long: SNW/SKI-interacting protein (613 aa).

Residues 135–170 are a coiled coil; the sequence is EGDLGTVVDEEEELQKEIQETAEETKAAIEKIVNVR. Residues 186–350 form an SNW region; sequence SQYIKYKPSQ…KARSERTGAA (165 aa). Disordered regions lie at residues 219–252, 315–437, and 513–613; these read LDPP…TVKD, MRSK…RDRD, and DEQL…SDRR. Phosphoserine is present on residues S235 and S243. The span at 236-247 shows a compositional bias: pro residues; sequence PPVPVMHSPPRP. Basic and acidic residues-rich tracts occupy residues 315 to 335, 358 to 437, 515 to 529, 538 to 548, and 562 to 574; these read MRSK…EQEL, DRGR…RDRD, QLDK…KPDK, VGSKRDRPVEF, and WVSD…KPLD. Coiled coils occupy residues 318–349 and 391–421; these read KVQK…RTGA and REER…DAKD. The segment covering 577 to 590 has biased composition (gly residues); sequence GSGGTMRASGGGGS. Positions 592–613 are enriched in basic and acidic residues; that stretch reads SRDDDHGGSGRTKINFERSDRR.

Belongs to the SNW family. In terms of assembly, component of the spliceosome. Interacts with SR45. In terms of tissue distribution, expressed in roots, stems, seedlings, siliques, cotyledons, leaves, inflorescences, seeds and shoot apical meristem.

Its subcellular location is the nucleus speckle. In terms of biological role, splicing factor involved in post-transcriptional regulation of circadian clock and flowering time genes. Associates with the pre-mRNA of PRR7, PRR9, ELF3 and GI, and is necessary for the regulation of their alternative splicing and mRNA maturation. Probably involved in splice site recognition. This is SNW/SKI-interacting protein (SKIP) from Arabidopsis thaliana (Mouse-ear cress).